The sequence spans 1663 residues: Kotanin synthase (1663 aa).

An N-terminal acylcarrier protein transacylase domain (SAT) region spans residues 19–168 (RPHEFSFNTQ…PLPVYGGPCH (150 aa)). The region spanning 301-731 (DSRIAVVGMS…GGNTSLLLEE (431 aa)) is the Ketosynthase family 3 (KS3) domain. Catalysis depends on for beta-ketoacyl synthase activity residues Cys474, His609, and His650. Residues 830–1149 (FIFSGQGSFY…SMCTLQETGV (320 aa)) form a malonyl-CoA:ACP transacylase (MAT) domain region. Positions 1209–1527 (TALVHQIMEE…PRILMNRFFD (319 aa)) are product template (PT) domain. The N-terminal hotdog fold stretch occupies residues 1213–1349 (HQIMEESFRP…GVVRCGDRQS (137 aa)). The 311-residue stretch at 1213-1523 (HQIMEESFRP…LRPLPRILMN (311 aa)) folds into the PKS/mFAS DH domain. His1245 (proton acceptor; for dehydratase activity) is an active-site residue. The interval 1376–1523 (QASRVSRDLV…LRPLPRILMN (148 aa)) is C-terminal hotdog fold. The active-site Proton donor; for dehydratase activity is the Asp1434. The tract at residues 1544–1580 (DLPQVQHQPSPTTDSGPDDDPKDPNTGPLTPEVDLPV) is disordered. The region spanning 1586–1663 (KANTKLVRGA…ELKEYLTASW (78 aa)) is the Carrier domain. Ser1623 bears the O-(pantetheine 4'-phosphoryl)serine mark.

Requires pantetheine 4'-phosphate as cofactor.

The protein operates within secondary metabolite biosynthesis. Non-reducing polyketide synthase; part of the gene cluster that mediates the biosynthesis of the bicoumarin kotanin. The non-reducing polyketide synthase ktnS first catalyzes the formation of the pentaketidic 4,7-dihydroxy-5-methylcoumarin from acetyl coenzyme A and 4 malonyl coenzyme A molecules. Further O-methylation by ktnB leads to the formation of 7-demethylsiderin. Then, an oxidative phenol coupling catalyzed by the cytochrome P450 monooxygenase ktnC forms the 8,8'-dimer P-orlandin via dimerization the monomeric precursor, 7-demethylsiderin. P-orlandin is subsequently O-methylated in a stepwise fashion to demethylkotanin and kotanin. The sequence is that of Kotanin synthase from Aspergillus niger (strain ATCC MYA-4892 / CBS 513.88 / FGSC A1513).